The chain runs to 152 residues: Small ribosomal subunit protein uS13 (152 aa).

The tract at residues 133–152 (GQHTKTTGRRGRTVGVSKKK) is disordered.

This sequence belongs to the universal ribosomal protein uS13 family.

It localises to the cytoplasm. In terms of biological role, located at the top of the head of the 40S subunit, it contacts several helices of the 18S rRNA. This chain is Small ribosomal subunit protein uS13 (RpS18), found in Spodoptera frugiperda (Fall armyworm).